The chain runs to 334 residues: N-acetyl-gamma-glutamyl-phosphate reductase (334 aa).

C154 is an active-site residue.

It belongs to the NAGSA dehydrogenase family. Type 1 subfamily.

Its subcellular location is the cytoplasm. The catalysed reaction is N-acetyl-L-glutamate 5-semialdehyde + phosphate + NADP(+) = N-acetyl-L-glutamyl 5-phosphate + NADPH + H(+). It participates in amino-acid biosynthesis; L-arginine biosynthesis; N(2)-acetyl-L-ornithine from L-glutamate: step 3/4. Catalyzes the NADPH-dependent reduction of N-acetyl-5-glutamyl phosphate to yield N-acetyl-L-glutamate 5-semialdehyde. The chain is N-acetyl-gamma-glutamyl-phosphate reductase from Shigella flexneri.